We begin with the raw amino-acid sequence, 284 residues long: MIVVSGSQSQNLAFKVAKLLNTKLTRVEYKRFPDNEIYVRIVDEINDDEAVIINTQKNQNDAIVETILLCDALRDEGVKKITLVAPYLAYARQDKKFNPGEAISIRALAKIYSNIVDKLITINPHETHIKDFFTIPFIYGDAVPKLAEYVKDKLNDPIVLAPDKGALEFAKTASKILNAEYDYLEKTRLSPTEIQIAPKTLDAKDRDVFIVDDIISTGGTMATAVKLLKEQGAKKIIAACVHPVLIGDALNKLYSAGVEEVVGTDTYLSEVSKVSVAEVIVDLL.

Residues 34 to 36 and 92 to 93 contribute to the ATP site; these read DNE and RQ. Mg(2+)-binding residues include H125 and D163. The active site involves K186. Residues R188, D212, and 216 to 220 contribute to the D-ribose 5-phosphate site; that span reads STGGT.

The protein belongs to the ribose-phosphate pyrophosphokinase family. Class III (archaeal) subfamily. As to quaternary structure, homotetramer. It depends on Mg(2+) as a cofactor.

It localises to the cytoplasm. It catalyses the reaction D-ribose 5-phosphate + ATP = 5-phospho-alpha-D-ribose 1-diphosphate + AMP + H(+). The protein operates within metabolic intermediate biosynthesis; 5-phospho-alpha-D-ribose 1-diphosphate biosynthesis; 5-phospho-alpha-D-ribose 1-diphosphate from D-ribose 5-phosphate (route I): step 1/1. With respect to regulation, activated by inorganic phosphate, with a maximal activity at 190 mM. Above this concentration inorganic phosphate progressively inhibits the kinase. Completely inhibited by ADP, and partially inhibited by alpha,beta-methylene ATP (mATP). Lack of allosteric regulation. Its function is as follows. Involved in the biosynthesis of the central metabolite phospho-alpha-D-ribosyl-1-pyrophosphate (PRPP) via the transfer of pyrophosphoryl group from ATP to 1-hydroxyl of ribose-5-phosphate (Rib-5-P). It can also use dATP as diphosphoryl donor. The protein is Ribose-phosphate pyrophosphokinase of Methanocaldococcus jannaschii (strain ATCC 43067 / DSM 2661 / JAL-1 / JCM 10045 / NBRC 100440) (Methanococcus jannaschii).